Consider the following 127-residue polypeptide: E3 ubiquitin-protein ligase PPP1R11 (127 aa).

2 disordered regions span residues 1–55 and 70–127; these read MAEA…EHMG and AFGE…PMQH. Position 2 is an N-acetylalanine (Ala2). The span at 11–23 shows a compositional bias: low complexity; the sequence is ETVTETTVTVTTE. The span at 40 to 55 shows a compositional bias: basic and acidic residues; the sequence is KKVEWSSDTVDNEHMG. The segment at 53 to 63 is atypical RING finger domain 1; that stretch reads HMGRRSSKCCC. A phosphoserine mark is found at Ser74 and Ser75. Position 76 is a phosphothreonine (Thr76). Ser78 carries the phosphoserine modification. Positions 86-95 are atypical RING finger domain 2; it reads CGHTHCVRGH. Over residues 90-100 the composition is skewed to basic residues; the sequence is HCVRGHRKGRR. The span at 103–127 shows a compositional bias: pro residues; the sequence is TPGPTPTTPPQPPDPSQPPPGPMQH. Thr110 is subject to Phosphothreonine.

As to quaternary structure, interacts with TLR2 and UBE2D2. Auto-ubiquitinated.

It carries out the reaction S-ubiquitinyl-[E2 ubiquitin-conjugating enzyme]-L-cysteine + [acceptor protein]-L-lysine = [E2 ubiquitin-conjugating enzyme]-L-cysteine + N(6)-ubiquitinyl-[acceptor protein]-L-lysine.. It functions in the pathway protein modification; protein ubiquitination. In terms of biological role, atypical E3 ubiquitin-protein ligase which ubiquitinates TLR2 at 'Lys-754' leading to its degradation by the proteasome. Plays a role in regulating inflammatory cytokine release and gram-positive bacterial clearance by functioning, in part, through the ubiquitination and degradation of TLR2. Inhibitor of protein phosphatase 1. The sequence is that of E3 ubiquitin-protein ligase PPP1R11 (Ppp1r11) from Rattus norvegicus (Rat).